We begin with the raw amino-acid sequence, 576 residues long: Epsin-1 (576 aa).

A 1,2-diacyl-sn-glycero-3-phospho-(1D-myo-inositol-4,5-bisphosphate)-binding residues include arginine 8, lysine 11, arginine 25, asparagine 30, arginine 63, and histidine 73. Residues 12 to 144 (NIVHNYSEAE…RDEDRLREER (133 aa)) enclose the ENTH domain. Positions 149–185 (KTKEKLAQTATASSAAVGSGPPPEAEQAWPQSSGEEE) are disordered. The span at 157-167 (TATASSAAVGS) shows a compositional bias: low complexity. 3 UIM domains span residues 183-202 (EEEL…ADQP), 208-227 (EDDA…HDKE), and 233-252 (GDDL…TGGK). A compositionally biased stretch (low complexity) spans 265 to 296 (TAPAPAPTTDPWGGPAPMAAAVPTAAPTSDPW). The tract at residues 265 to 404 (TAPAPAPTTD…GGFDTEPDEF (140 aa)) is disordered. 8 repeat units span residues 274-276 (DPW), 294-296 (DPW), 306-308 (DPW), 319-321 (DPW), 332-334 (DPW), 349-351 (DPW), 367-369 (DPW), and 377-379 (DPW). Residues 274 to 379 (DPWGGPAPMA…TPAPAFSDPW (106 aa)) form an 8 X 3 AA repeats of [ED]-P-W region. Positions 297 to 314 (GGPPVPPAADPWGGPAPT) are enriched in pro residues. Low complexity predominate over residues 332 to 368 (DPWGGTPAPAAGEGPTPDPWGSSDGGVPVSGPSASDP). At serine 382 the chain carries Phosphoserine; by CDK1. A [DE]-X(1,2)-F-X-X-[FL]-X-X-X-R motif motif is present at residues 402–411 (DEFSDFDRLR). A phosphoserine mark is found at serine 419, serine 420, serine 435, serine 447, and serine 454. Positions 448-576 (LAEAVGSPPP…PAPNTNPFLL (129 aa)) are disordered. Over residues 454–468 (SPPPAATPTPTPPTR) the composition is skewed to pro residues. Residues threonine 460, threonine 464, and threonine 470 each carry the phosphothreonine modification. A Phosphoserine modification is found at serine 473. Residue threonine 494 is modified to Phosphothreonine. 2 repeat units span residues 502 to 504 (NPF) and 518 to 520 (NPF). Residues 502-574 (NPFLPGGGPA…GPPAPNTNPF (73 aa)) form a 3 X 3 AA repeats of N-P-F region. Position 534 is an omega-N-methylarginine (arginine 534). Positions 557 to 570 (GLPPMMPPGPPAPN) are enriched in pro residues. Residues 572–574 (NPF) form repeat 3.

It belongs to the epsin family. Monomer. Binds clathrin, ZBTB16/ZNF145 and ITSN1. Binds ubiquitinated proteins. Binds AP2A1 and AP2A2. Interacts with RALBP1 in a complex also containing NUMB and TFAP2A during interphase and mitosis. Interacts with AP2B1. Interacts with UBQLN2. Interacts with REPS2; the interaction is direct. Interacts with EPS15; the interaction is direct. Interacts with ENTREP1. In terms of processing, phosphorylated on serine and/or threonine residues in mitotic cells. Phosphorylation reduces interaction with REPS2, AP-2 and the membrane fraction. Depolarization of synaptosomes results in dephosphorylation. Post-translationally, ubiquitinated.

Its subcellular location is the cytoplasm. The protein localises to the cell membrane. It localises to the nucleus. It is found in the membrane. The protein resides in the clathrin-coated pit. Binds to membranes enriched in phosphatidylinositol 4,5-bisphosphate (PtdIns(4,5)P2). Modifies membrane curvature and facilitates the formation of clathrin-coated invaginations. Regulates receptor-mediated endocytosis. The chain is Epsin-1 (EPN1) from Homo sapiens (Human).